A 246-amino-acid chain; its full sequence is Ribonuclease PH (246 aa).

Residues arginine 91 and 129–131 contribute to the phosphate site; that span reads GTR.

Belongs to the RNase PH family. Homohexameric ring arranged as a trimer of dimers.

The enzyme catalyses tRNA(n+1) + phosphate = tRNA(n) + a ribonucleoside 5'-diphosphate. Functionally, phosphorolytic 3'-5' exoribonuclease that plays an important role in tRNA 3'-end maturation. Removes nucleotide residues following the 3'-CCA terminus of tRNAs; can also add nucleotides to the ends of RNA molecules by using nucleoside diphosphates as substrates, but this may not be physiologically important. Probably plays a role in initiation of 16S rRNA degradation (leading to ribosome degradation) during starvation. The polypeptide is Ribonuclease PH (Burkholderia ambifaria (strain ATCC BAA-244 / DSM 16087 / CCUG 44356 / LMG 19182 / AMMD) (Burkholderia cepacia (strain AMMD))).